Consider the following 381-residue polypeptide: 2-oxoglutarate-dependent dioxygenase FGSG_00048 (381 aa).

The protein belongs to the iron/ascorbate-dependent oxidoreductase family. Fe(2+) serves as cofactor.

Its pathway is mycotoxin biosynthesis. Its function is as follows. 2-oxoglutarate-dependent dioxygenase; part of the gene cluster that mediates the biosynthesis of gramillins A and B, bicyclic lipopeptides that induce cell death in maize leaves but not in wheat leaves. The nonribosomal peptide synthetase GRA1 incorporates respectively a glutamic adic (Glu), a leucine (Leu), a serine (Ser), a hydroxyglutamine (HOGln), a 2-amino decanoic acid, and 2 cysteins (CysB and CysA). The biosynthesis of 2-amino decanoic acid incorporated in gramillins could be initiated by a fatty acid synthase composed of the alpha and beta subunits FGSG_00036 and FGSG_11656. The cytochrome P450 monooxygenase FGSG_15680 could hydroxylate the fatty acid chain. Subsequent oxidation to the ketone by the oxidoreductase FGSG_00048 and transamination by aminotransferase FGSG_00049 could form 2-amino-decanoic acid. On the other hand, FGSG_15680 could also be responsible for the HO-modified glutamine at the gamma-position. Whether hydroxylation occurs on the fully assembled product or on the Gln residue prior to assembly into the gramillins requires further proof. The thioredoxin FGSG_00043 could also be required for the disulfide-bond formation between CysA and CysB. The specific involvement of the remaining proteins from the cluster is more difficult to discern, but could have broader regulatory (FGSG_00040 and FGSG_11657) or enzymatic functions (FGSG_00044 and FGSG_00045). The final C-domain of GRA1 does not possess the expected sequence of a termination CT domain, often implicated in macrocyclization and release of a cyclopeptidein fungal NRPs; and the thioesterase FGSG_00047 may act in concert with the terminal C-domain of GRA1 to catalyze the formation of the macrocyclic anhydride and release of the products. The protein is 2-oxoglutarate-dependent dioxygenase FGSG_00048 of Gibberella zeae (strain ATCC MYA-4620 / CBS 123657 / FGSC 9075 / NRRL 31084 / PH-1) (Wheat head blight fungus).